Consider the following 882-residue polypeptide: Valine--tRNA ligase (882 aa).

The 'HIGH' region signature appears at 45-55 (PNVTGKLHLGH). The 'KMSKS' region motif lies at 519–523 (KMSKS). Residue lysine 522 participates in ATP binding. A coiled-coil region spans residues 808 to 882 (LADLLNVEEE…RIAEMHKLVK (75 aa)).

This sequence belongs to the class-I aminoacyl-tRNA synthetase family. ValS type 1 subfamily. Monomer.

The protein localises to the cytoplasm. The catalysed reaction is tRNA(Val) + L-valine + ATP = L-valyl-tRNA(Val) + AMP + diphosphate. Its function is as follows. Catalyzes the attachment of valine to tRNA(Val). As ValRS can inadvertently accommodate and process structurally similar amino acids such as threonine, to avoid such errors, it has a 'posttransfer' editing activity that hydrolyzes mischarged Thr-tRNA(Val) in a tRNA-dependent manner. This Streptococcus pyogenes serotype M18 (strain MGAS8232) protein is Valine--tRNA ligase.